We begin with the raw amino-acid sequence, 60 residues long: Large ribosomal subunit protein bL32 (60 aa).

The segment covering 1–16 (MAVPKKKTSKSRKNMR) has biased composition (basic residues). Residues 1–20 (MAVPKKKTSKSRKNMRRAHD) form a disordered region.

It belongs to the bacterial ribosomal protein bL32 family.

This chain is Large ribosomal subunit protein bL32, found in Geobacter metallireducens (strain ATCC 53774 / DSM 7210 / GS-15).